Reading from the N-terminus, the 259-residue chain is Small ribosomal subunit protein uS2 (259 aa).

This sequence belongs to the universal ribosomal protein uS2 family.

The chain is Small ribosomal subunit protein uS2 from Dinoroseobacter shibae (strain DSM 16493 / NCIMB 14021 / DFL 12).